Consider the following 150-residue polypeptide: Nucleoside diphosphate kinase (150 aa).

The ATP site is built by K10, F58, R86, T92, R103, and N113. The Pros-phosphohistidine intermediate role is filled by H116.

It belongs to the NDK family. Homohexamer. It depends on Mg(2+) as a cofactor.

The enzyme catalyses a 2'-deoxyribonucleoside 5'-diphosphate + ATP = a 2'-deoxyribonucleoside 5'-triphosphate + ADP. It catalyses the reaction a ribonucleoside 5'-diphosphate + ATP = a ribonucleoside 5'-triphosphate + ADP. Functionally, major role in the synthesis of nucleoside triphosphates other than ATP. The ATP gamma phosphate is transferred to the NDP beta phosphate via a ping-pong mechanism, using a phosphorylated active-site intermediate. In Drosophila yakuba (Fruit fly), this protein is Nucleoside diphosphate kinase (awd).